Here is a 215-residue protein sequence, read N- to C-terminus: Cytochrome b6 (215 aa).

Residues 32–52 traverse the membrane as a helical segment; it reads IFHCLGGITLTCFLVQVATGF. Cys35 contributes to the heme c binding site. Residues His86 and His100 each contribute to the heme b site. Helical transmembrane passes span 90–110, 116–136, and 186–206; these read ASMMVLMMILHVFRVYLTGGF, LTWVTGVVLAVLTASFGVTGY, and LHTFVLPLLTAVFMLMHFSMI. Heme b contacts are provided by His187 and His202.

This sequence belongs to the cytochrome b family. PetB subfamily. In terms of assembly, the 4 large subunits of the cytochrome b6-f complex are cytochrome b6, subunit IV (17 kDa polypeptide, PetD), cytochrome f and the Rieske protein, while the 4 small subunits are PetG, PetL, PetM and PetN. The complex functions as a dimer. Requires heme b as cofactor. It depends on heme c as a cofactor.

The protein resides in the plastid. The protein localises to the chloroplast thylakoid membrane. Component of the cytochrome b6-f complex, which mediates electron transfer between photosystem II (PSII) and photosystem I (PSI), cyclic electron flow around PSI, and state transitions. This Nymphaea alba (White water-lily) protein is Cytochrome b6.